We begin with the raw amino-acid sequence, 339 residues long: Transcription initiation factor IIB (339 aa).

The TFIIB-type zinc finger occupies 39–70 (EELICPVCGSKSIIKDYERAEIVCEMCGCVLQ). Zn(2+) contacts are provided by C43, C46, C62, and C65. 2 repeat units span residues 156-239 (SELD…SREL) and 250-331 (DYVP…ELTE).

The protein belongs to the TFIIB family.

In terms of biological role, stabilizes TBP binding to an archaeal box-A promoter. Also responsible for recruiting RNA polymerase II to the pre-initiation complex (DNA-TBP-TFIIB). The sequence is that of Transcription initiation factor IIB from Methanococcus maripaludis (strain DSM 14266 / JCM 13030 / NBRC 101832 / S2 / LL).